Here is a 598-residue protein sequence, read N- to C-terminus: Nuclear receptor subfamily 4 group A member 1 (598 aa).

2 disordered regions span residues methionine 1 to alanine 43 and glycine 128 to leucine 151. Residues serine 134–serine 145 show a composition bias toward low complexity. Positions arginine 171 to serine 466 are required for nuclear import. A DNA-binding region (nuclear receptor) is located at residues glutamate 264 to threonine 339. 2 consecutive NR C4-type zinc fingers follow at residues cysteine 267–cysteine 287 and cysteine 303–cysteine 327. The segment at alanine 268–lysine 354 is required for binding NBRE-containing DNA. Positions alanine 299 to proline 361 are required for the interaction with RXRA. Serine 341 carries the phosphoserine; by PKA modification. Residues serine 341–proline 361 form a disordered region. Position 351 is a phosphoserine; by PKA, RPS6KA1 and RPS6KA3 (serine 351). The 236-residue stretch at serine 360–threonine 595 folds into the NR LBD domain. Positions proline 521–glycine 544 are binds lipopolysaccharide. The AF-2 stretch occupies residues proline 584–threonine 595.

This sequence belongs to the nuclear hormone receptor family. NR4 subfamily. Binds the NGFI-B response element (NBRE) as a monomer. Binds the Nur response element (NurRE), consisting of two inverse NBRE-related octanucleotide repeats separated by 6 base-pairs, as a dimer. Interacts (via N-terminus) with NLRP3 (via LRR repeat domain); the interaction is direct, requires binding of NR4A1/Nur77 to NBRE-containing dsDNA and lipopolysaccharide, and leads to non-canonical NLRP3 inflammasome activation. Interacts with GADD45GIP1. Interacts with STK11. Interacts with IFI27. Heterodimer (via DNA-binding domain) with RXRA (via C-terminus); DNA-binding of the heterodimer is enhanced by 9-cis retinoic acid. Competes for the RXRA interaction with EP300 and thereby attenuates EP300 mediated acetylation of RXRA. Interacts with NCOA1. Interacts with NCOA2. Interacts with NCOA3. The cofactor is Zn(2+). Phosphorylated at Ser-351 by RPS6KA1 and RPS6KA3 in response to mitogenic or stress stimuli. In terms of processing, acetylated by p300/CBP, acetylation increases stability. Deacetylated by HDAC1.

It is found in the nucleus. The protein resides in the cytoplasm. The protein localises to the cytosol. Its subcellular location is the mitochondrion. Functionally, orphan nuclear receptor. Binds the NGFI-B response element (NBRE) 5'-AAAGGTCA-3'. Binds 9-cis-retinoic acid outside of its ligand-binding (NR LBD) domain. Participates in energy homeostasis by sequestrating the kinase STK11 in the nucleus, thereby attenuating cytoplasmic AMPK activation. Regulates the inflammatory response in macrophages by regulating metabolic adaptations during inflammation, including repressing the transcription of genes involved in the citric acid cycle (TCA). Inhibits NF-kappa-B signaling by binding to low-affinity NF-kappa-B binding sites, such as at the IL2 promoter. May act concomitantly with NR4A2 in regulating the expression of delayed-early genes during liver regeneration. Plays a role in the vascular response to injury. In the cytosol, upon its detection of both bacterial lipopolysaccharide (LPS) and NBRE-containing mitochondrial DNA released by GSDMD pores during pyroptosis, it promotes non-canonical NLRP3 inflammasome activation by stimulating association of NLRP3 and NEK7. The polypeptide is Nuclear receptor subfamily 4 group A member 1 (NR4A1) (Bos taurus (Bovine)).